The primary structure comprises 536 residues: Putative cysteine ligase BshC (536 aa).

The protein belongs to the BshC family.

Its function is as follows. Involved in bacillithiol (BSH) biosynthesis. May catalyze the last step of the pathway, the addition of cysteine to glucosamine malate (GlcN-Mal) to generate BSH. The polypeptide is Putative cysteine ligase BshC (Anoxybacillus flavithermus (strain DSM 21510 / WK1)).